We begin with the raw amino-acid sequence, 629 residues long: tRNA uridine 5-carboxymethylaminomethyl modification enzyme MnmG (629 aa).

Residues 13–18, Val-125, and Ser-180 each bind FAD; that span reads GGGHAG. 273-287 is an NAD(+) binding site; the sequence is GPRYCPSIEDKVMRF. Gln-370 contacts FAD.

Belongs to the MnmG family. Homodimer. Heterotetramer of two MnmE and two MnmG subunits. Requires FAD as cofactor.

The protein localises to the cytoplasm. Functionally, NAD-binding protein involved in the addition of a carboxymethylaminomethyl (cmnm) group at the wobble position (U34) of certain tRNAs, forming tRNA-cmnm(5)s(2)U34. The sequence is that of tRNA uridine 5-carboxymethylaminomethyl modification enzyme MnmG from Salmonella choleraesuis (strain SC-B67).